The chain runs to 458 residues: Bifunctional protein GlmU (458 aa).

The interval 1 to 232 is pyrophosphorylase; sequence MTSSLSVIIL…TFEIEGVNNR (232 aa). Residues 10 to 13, K24, Q79, 84 to 85, 106 to 108, G142, E157, N172, and N230 each bind UDP-N-acetyl-alpha-D-glucosamine; these read LAAG, GT, and YGD. D108 contacts Mg(2+). N230 serves as a coordination point for Mg(2+). A linker region spans residues 233–253; that stretch reads QQLASLERTWQGKLVADLQEA. Residues 254-458 form an N-acetyltransferase region; it reads GVQFADPTRV…KNDFKRPTKK (205 aa). 2 residues coordinate UDP-N-acetyl-alpha-D-glucosamine: R336 and K354. H366 (proton acceptor) is an active-site residue. UDP-N-acetyl-alpha-D-glucosamine is bound by residues Y369 and N380. Acetyl-CoA-binding positions include A383, 389–390, S408, A426, and R443; that span reads NY.

This sequence in the N-terminal section; belongs to the N-acetylglucosamine-1-phosphate uridyltransferase family. The protein in the C-terminal section; belongs to the transferase hexapeptide repeat family. As to quaternary structure, homotrimer. Requires Mg(2+) as cofactor.

The protein resides in the cytoplasm. It carries out the reaction alpha-D-glucosamine 1-phosphate + acetyl-CoA = N-acetyl-alpha-D-glucosamine 1-phosphate + CoA + H(+). The catalysed reaction is N-acetyl-alpha-D-glucosamine 1-phosphate + UTP + H(+) = UDP-N-acetyl-alpha-D-glucosamine + diphosphate. Its pathway is nucleotide-sugar biosynthesis; UDP-N-acetyl-alpha-D-glucosamine biosynthesis; N-acetyl-alpha-D-glucosamine 1-phosphate from alpha-D-glucosamine 6-phosphate (route II): step 2/2. The protein operates within nucleotide-sugar biosynthesis; UDP-N-acetyl-alpha-D-glucosamine biosynthesis; UDP-N-acetyl-alpha-D-glucosamine from N-acetyl-alpha-D-glucosamine 1-phosphate: step 1/1. It functions in the pathway bacterial outer membrane biogenesis; LPS lipid A biosynthesis. Functionally, catalyzes the last two sequential reactions in the de novo biosynthetic pathway for UDP-N-acetylglucosamine (UDP-GlcNAc). The C-terminal domain catalyzes the transfer of acetyl group from acetyl coenzyme A to glucosamine-1-phosphate (GlcN-1-P) to produce N-acetylglucosamine-1-phosphate (GlcNAc-1-P), which is converted into UDP-GlcNAc by the transfer of uridine 5-monophosphate (from uridine 5-triphosphate), a reaction catalyzed by the N-terminal domain. The polypeptide is Bifunctional protein GlmU (Psychrobacter cryohalolentis (strain ATCC BAA-1226 / DSM 17306 / VKM B-2378 / K5)).